Consider the following 243-residue polypeptide: 1-(5-phosphoribosyl)-5-[(5-phosphoribosylamino)methylideneamino] imidazole-4-carboxamide isomerase (243 aa).

Asp8 (proton acceptor) is an active-site residue. The Proton donor role is filled by Asp129.

This sequence belongs to the HisA/HisF family.

The protein resides in the cytoplasm. It carries out the reaction 1-(5-phospho-beta-D-ribosyl)-5-[(5-phospho-beta-D-ribosylamino)methylideneamino]imidazole-4-carboxamide = 5-[(5-phospho-1-deoxy-D-ribulos-1-ylimino)methylamino]-1-(5-phospho-beta-D-ribosyl)imidazole-4-carboxamide. Its pathway is amino-acid biosynthesis; L-histidine biosynthesis; L-histidine from 5-phospho-alpha-D-ribose 1-diphosphate: step 4/9. This Brucella suis biovar 1 (strain 1330) protein is 1-(5-phosphoribosyl)-5-[(5-phosphoribosylamino)methylideneamino] imidazole-4-carboxamide isomerase.